Reading from the N-terminus, the 154-residue chain is Putative hydrogenase maturation protease MJ0253 (154 aa).

It belongs to the peptidase A31 family.

The protein is Putative hydrogenase maturation protease MJ0253 of Methanocaldococcus jannaschii (strain ATCC 43067 / DSM 2661 / JAL-1 / JCM 10045 / NBRC 100440) (Methanococcus jannaschii).